Here is a 627-residue protein sequence, read N- to C-terminus: MGKIIGIDLGTTNSCVSVMEGNEAVVIPNAEGKRTTPSIIAFVEGGEIKVGDPAKRQAVTNPTKTIASIKRFMGHTFAETQDEAKRVPYSVVKGDNNTPRVDIDGRLYTAQELSAMTLQKMKKTAEDYLGQTVTEAVITVPAYFNDAQRQATKEAGEIAGLKVMRIINEPTAAALAYGLDKKGNDQKIAVYDLGGGTFDISVLELGDGVFEVLSTNGDTHLGGDDFDQVIIDWLADEFKTEEGIDLRLDPMSLQRLKEAAEKAKIELSSSAETEINLPYVTATASGPKHLVKKLSRAKFEQLSDTLVKRSMEPVAKALKDAGLSTSDIDEVILVGGSTRMPRIADEVEKFFGKKASKGVNPDEVVAIGAAIQGGVLSGDVKDVLLLDVTPLSLGIETMGGVLTKLIESNTTIPTKKSQVFSTAADSQPSVEIHVLQGERAMAADNKTIGRFHLDGIPPAPRGVPQIEVTFDIDANGIIKVSATDKGTGKSHDIRIEASSGLTAEEIEKMKKDAEANADADRIAKERAEKLNEADSTIFQTESQLKELGDKLTDDQKTAIEYALTELRMAHQSQDLDAIQKGLDNVNAAWKTATEAMYAQGGDQGQQAAPQQEQSGDNVEDVEFEEVK.

Threonine 197 carries the phosphothreonine; by autocatalysis modification. The span at 596-615 (MYAQGGDQGQQAAPQQEQSG) shows a compositional bias: low complexity. Residues 596–627 (MYAQGGDQGQQAAPQQEQSGDNVEDVEFEEVK) form a disordered region. Over residues 617-627 (NVEDVEFEEVK) the composition is skewed to acidic residues.

Belongs to the heat shock protein 70 family.

Acts as a chaperone. This Flavobacterium johnsoniae (strain ATCC 17061 / DSM 2064 / JCM 8514 / BCRC 14874 / CCUG 350202 / NBRC 14942 / NCIMB 11054 / UW101) (Cytophaga johnsonae) protein is Chaperone protein DnaK.